The following is a 342-amino-acid chain: Probable endoglucanase (342 aa).

A signal peptide spans 1 to 20 (MSVMAAMGGAQVLSSTGAFA). Glu57 serves as the catalytic Proton donor. Asp114 (nucleophile) is an active-site residue.

This sequence belongs to the glycosyl hydrolase 8 (cellulase D) family.

It localises to the secreted. It catalyses the reaction Endohydrolysis of (1-&gt;4)-beta-D-glucosidic linkages in cellulose, lichenin and cereal beta-D-glucans.. Enzyme capable of hydrolyzing carboxy-methyl-cellulose (CMC). This chain is Probable endoglucanase (cmcAX), found in Novacetimonas hansenii (Komagataeibacter hansenii).